Here is a 109-residue protein sequence, read N- to C-terminus: Flagellar transcriptional regulator FlhD (109 aa).

The protein belongs to the FlhD family. Homodimer; disulfide-linked. Forms a heterohexamer composed of two FlhC and four FlhD subunits. Each FlhC binds a FlhD dimer, forming a heterotrimer, and a hexamer assembles by dimerization of two heterotrimers.

It localises to the cytoplasm. Functions in complex with FlhC as a master transcriptional regulator that regulates transcription of several flagellar and non-flagellar operons by binding to their promoter region. Activates expression of class 2 flagellar genes, including fliA, which is a flagellum-specific sigma factor that turns on the class 3 genes. Also regulates genes whose products function in a variety of physiological pathways. The protein is Flagellar transcriptional regulator FlhD of Acidovorax sp. (strain JS42).